A 143-amino-acid chain; its full sequence is Hemoglobin subunit alpha-2 (143 aa).

Ser2 is modified (N-acetylserine). The Globin domain maps to 2-143 (SLSSKQKATV…LALALAEKYR (142 aa)). His60 provides a ligand contact to O2. His89 is a heme b binding site.

Belongs to the globin family. In terms of assembly, hb 2 is a heterotetramer of two alpha-2 and two beta-2 chains. In terms of tissue distribution, red blood cells.

Its function is as follows. Involved in oxygen transport from gills to the various peripheral tissues. The sequence is that of Hemoglobin subunit alpha-2 (hba2) from Gadus morhua (Atlantic cod).